Here is a 534-residue protein sequence, read N- to C-terminus: Ethanolamine kinase (534 aa).

A Phosphoserine modification is found at serine 23.

It belongs to the choline/ethanolamine kinase family.

The protein localises to the cytoplasm. The catalysed reaction is ethanolamine + ATP = phosphoethanolamine + ADP + H(+). It catalyses the reaction choline + ATP = phosphocholine + ADP + H(+). It participates in phospholipid metabolism; phosphatidylethanolamine biosynthesis; phosphatidylethanolamine from ethanolamine: step 1/3. Functionally, catalyzes the committed step of phosphatidylethanolamine synthesis via the CDP-ethanolamine branch of the Kennedy pathway. Also exhibits choline kinase activity, thus contributing to phosphatidylcholine synthesis via the CDP-choline pathway, but its preferred substrate is ethanolamine. The chain is Ethanolamine kinase (EKI1) from Saccharomyces cerevisiae (strain ATCC 204508 / S288c) (Baker's yeast).